The primary structure comprises 176 residues: Probable inosine/xanthosine triphosphatase (176 aa).

D36 lines the Mg(2+) pocket.

It belongs to the YjjX NTPase family. As to quaternary structure, homodimer. Mg(2+) is required as a cofactor. Mn(2+) serves as cofactor.

The catalysed reaction is XTP + H2O = XDP + phosphate + H(+). The enzyme catalyses ITP + H2O = IDP + phosphate + H(+). Phosphatase that hydrolyzes non-canonical purine nucleotides such as XTP and ITP to their respective diphosphate derivatives. Probably excludes non-canonical purines from DNA/RNA precursor pool, thus preventing their incorporation into DNA/RNA and avoiding chromosomal lesions. The polypeptide is Probable inosine/xanthosine triphosphatase (Saccharolobus islandicus (strain M.16.4 / Kamchatka #3) (Sulfolobus islandicus)).